Consider the following 435-residue polypeptide: Methylenetetrahydrofolate--tRNA-(uracil-5-)-methyltransferase TrmFO (435 aa).

Residue Gly-7–Gly-12 participates in FAD binding.

The protein belongs to the MnmG family. TrmFO subfamily. Requires FAD as cofactor.

Its subcellular location is the cytoplasm. It catalyses the reaction uridine(54) in tRNA + (6R)-5,10-methylene-5,6,7,8-tetrahydrofolate + NADH + H(+) = 5-methyluridine(54) in tRNA + (6S)-5,6,7,8-tetrahydrofolate + NAD(+). It carries out the reaction uridine(54) in tRNA + (6R)-5,10-methylene-5,6,7,8-tetrahydrofolate + NADPH + H(+) = 5-methyluridine(54) in tRNA + (6S)-5,6,7,8-tetrahydrofolate + NADP(+). In terms of biological role, catalyzes the folate-dependent formation of 5-methyl-uridine at position 54 (M-5-U54) in all tRNAs. This is Methylenetetrahydrofolate--tRNA-(uracil-5-)-methyltransferase TrmFO from Thermotoga petrophila (strain ATCC BAA-488 / DSM 13995 / JCM 10881 / RKU-1).